The sequence spans 1553 residues: ABC-type transporter cctS (1553 aa).

The next 4 membrane-spanning stretches (helical) occupy residues 27-47 (LIPLTACLASAIACLISYFHA), 90-110 (LEVALILAEISIAIFLLIFSG), 114-134 (DLTSVFASAVSSIYLLLILFV), and 151-171 (SVLYTLQWTCLTAIVHAAILG). Residue asparagine 176 is glycosylated (N-linked (GlcNAc...) asparagine). 5 consecutive transmembrane segments (helical) span residues 177–197 (FTIATLVRFALFTFLCLFHWT), 286–306 (LLWQGAWATLNSFAVFVPPVL), 324–344 (TAWLYVTGLLVAGIVAGVAGC), 413–433 (GYLYLVWITFPVQTAIGTYLL), and 438–458 (GISGIVGVALMLGLLPLNILI). Residues 293-582 (ATLNSFAVFV…IADAITFLLR (290 aa)) enclose the ABC transmembrane type-1 1 domain. Asparagine 524 carries an N-linked (GlcNAc...) asparagine glycan. 2 helical membrane-spanning segments follow: residues 527-547 (TFFSLPLIVTILTLFFYTVVW) and 550-570 (SMGTAVAFPALVIFSILRIPF). Residue asparagine 617 is glycosylated (N-linked (GlcNAc...) asparagine). In terms of domain architecture, ABC transporter 1 spans 635 to 874 (NKRSDIQLTE…GRIDADIMQN (240 aa)). Residue 670 to 677 (GPSGSGKS) participates in ATP binding. The N-linked (GlcNAc...) asparagine glycan is linked to asparagine 725. Residues 948–970 (WYWVLVLFMFGIQQFISLATNIW) traverse the membrane as a helical segment. The 305-residue stretch at 951–1255 (VLVLFMFGIQ…FVQLYAIVQQ (305 aa)) folds into the ABC transmembrane type-1 2 domain. A glycan (N-linked (GlcNAc...) asparagine) is linked at asparagine 992. Residues 1017–1037 (IYVAICLAYAFFTFARDLIVF) traverse the membrane as a helical segment. N-linked (GlcNAc...) asparagine glycosylation is present at asparagine 1085. 4 helical membrane-spanning segments follow: residues 1086–1108 (ISTFSINTLQIAASLVMIIVFIS), 1113–1135 (AFLIAAVFICVAYWFVMTIFING), 1204–1224 (FLGSLILFFTGAFVVWDLESV), and 1229–1249 (AALVLTYAAMFSESIMWFVQL). The ABC transporter 2 domain occupies 1294–1533 (VRFDAYTTRY…DDDGIFRRLC (240 aa)). 1328 to 1335 (GRTGAGKS) provides a ligand contact to ATP.

It belongs to the ABC transporter superfamily.

It localises to the membrane. The protein operates within mycotoxin biosynthesis. Its function is as follows. ABC-type transporter; part of the gene cluster that mediates the biosynthesis of the mycotoxin cyclochlorotine, a hepatotoxic and carcinogenic cyclic chlorinated pentapeptide. CctS is essential for the biosynthesis of cyclochlorotine, maybe as a chloride channel that supplies chloride for chlorination by cctP2. The sequence is that of ABC-type transporter cctS from Talaromyces islandicus (Penicillium islandicum).